Here is a 280-residue protein sequence, read N- to C-terminus: Large ribosomal subunit protein uL2 (280 aa).

Positions G215–K280 are disordered.

Belongs to the universal ribosomal protein uL2 family. As to quaternary structure, part of the 50S ribosomal subunit. Forms a bridge to the 30S subunit in the 70S ribosome.

In terms of biological role, one of the primary rRNA binding proteins. Required for association of the 30S and 50S subunits to form the 70S ribosome, for tRNA binding and peptide bond formation. It has been suggested to have peptidyltransferase activity; this is somewhat controversial. Makes several contacts with the 16S rRNA in the 70S ribosome. In Dictyoglomus thermophilum (strain ATCC 35947 / DSM 3960 / H-6-12), this protein is Large ribosomal subunit protein uL2.